Reading from the N-terminus, the 248-residue chain is Large ribosomal subunit protein uL4 (248 aa).

Disordered regions lie at residues 72-103 (RSEN…KSLN) and 173-210 (GRSV…RNLS). Residues 92-103 (PKAEKDQTKSLN) are compositionally biased toward basic and acidic residues. Residues 177–189 (RAGRGKTRGRKYS) show a composition bias toward basic residues.

This sequence belongs to the universal ribosomal protein uL4 family. Part of the 50S ribosomal subunit.

One of the primary rRNA binding proteins, this protein initially binds near the 5'-end of the 23S rRNA. It is important during the early stages of 50S assembly. It makes multiple contacts with different domains of the 23S rRNA in the assembled 50S subunit and ribosome. Its function is as follows. Forms part of the polypeptide exit tunnel. The protein is Large ribosomal subunit protein uL4 of Halorubrum lacusprofundi (strain ATCC 49239 / DSM 5036 / JCM 8891 / ACAM 34).